Here is a 410-residue protein sequence, read N- to C-terminus: Subtilisin-like protease CPC735_003880 (410 aa).

An N-terminal signal peptide occupies residues 1-17 (MKLLKSSLLLLLPFVTA). A propeptide spanning residues 18–118 (NPIPSEDKDI…VTPDRKVYLA (101 aa)) is cleaved from the precursor. In terms of domain architecture, Inhibitor I9 spans 31 to 118 (RYIVTLKDGI…VTPDRKVYLA (88 aa)). Residues 127-410 (GYNLGHMSSK…IQEMNETVIA (284 aa)) enclose the Peptidase S8 domain. Asp-159 acts as the Charge relay system in catalysis. An N-linked (GlcNAc...) asparagine glycan is attached at Asn-182. His-191 acts as the Charge relay system in catalysis. 3 N-linked (GlcNAc...) asparagine glycosylation sites follow: Asn-238, Asn-251, and Asn-338. The Charge relay system role is filled by Ser-347. N-linked (GlcNAc...) asparagine glycosylation is present at Asn-405.

Belongs to the peptidase S8 family.

It is found in the secreted. In terms of biological role, secreted subtilisin-like serine protease with keratinolytic activity that contributes to pathogenicity. The polypeptide is Subtilisin-like protease CPC735_003880 (Coccidioides posadasii (strain C735) (Valley fever fungus)).